We begin with the raw amino-acid sequence, 574 residues long: Golgin subfamily A member 6-like protein 4 (574 aa).

The segment covering 1–11 has biased composition (pro residues); sequence MWPQPRFPPHP. Disordered regions lie at residues 1–77 and 491–552; these read MWPQ…YGEG and KELK…AAGG. The span at 51 to 62 shows a compositional bias: polar residues; sequence NGSSPDTATSGG. The stretch at 157-496 forms a coiled coil; it reads SKVEQLQDET…EQQVKELKKS (340 aa). Positions 491–504 are enriched in basic and acidic residues; sequence KELKKSGGAEEPRG. Over residues 508-523 the composition is skewed to low complexity; it reads AAAARPVAGAPVPQGA.

Belongs to the GOLGA6 family.

The polypeptide is Golgin subfamily A member 6-like protein 4 (GOLGA6L4) (Homo sapiens (Human)).